Consider the following 741-residue polypeptide: MAKQTFEMTFEGRPLVVEVGQVAKQANGAVVVRYGDTTVLSVAVMSKKMATANFFPLQVNYEEKMYAAGKFPGGFSKREGRPSTDATLTARLIDRPIRPMFAEGFRNEVQVINTVLSYDENASAPMAAMFGSSLALSISDIPFNGPIAGVQVAYAAEDFIINPSASDKEVSHLDLIVAGTKEAINMVEAGAQELSEDIMLQALLKGHEAIQELVDFQNYIVAAVGKEKAEVELFQVDADLKAEIEAVYYDQLAKAVQVEEKLAREAATKAVKEEVLASYQERFAEDEDKETILRDVVEILEQMEHAEVRRLITEDKIRPDGRRVDEIRPLDAEIDFLPNVHGSGLFTRGQTQALSVLTLAPMSDTQLVDGLDPEYKKRFLHHYNFPQYSVGETGRYGAPGRREIGHGALGERALAQVLPSVEEFPYAIRLVAEVLESNGSSSQASICAGTLALMAGGVPIKAPVAGIAMGLISDGTNYTVLTDIQGLEDHFGDMDFKVAGTRLGITALQMDIKISGITPAILEEALAQAKVARFEILDVIESAIAEPRSELAPTAPKIDSIQIPVDKIKVVIGKGGETIDKIIAETGVTIDIDEEGLVQIFSSDQDAIDRAKTIISDLVREAKVGEVYTVPVVRIEKFGAFVHLFNKTDALVHISELAWKHTEHVEDVVKVGDMVTVKIIKIDEKGRVDASIKTLLPKPEKNEDGENGEEHRHCCCSHHKPDHHNESVEAPKKSDESETKE.

Mg(2+) contacts are provided by Asp-489 and Asp-495. The KH domain maps to 556-615 (PKIDSIQIPVDKIKVVIGKGGETIDKIIAETGVTIDIDEEGLVQIFSSDQDAIDRAKTII). The S1 motif domain occupies 625-693 (GEVYTVPVVR…EKGRVDASIK (69 aa)). Residues 695–741 (LLPKPEKNEDGENGEEHRHCCCSHHKPDHHNESVEAPKKSDESETKE) are disordered. Basic and acidic residues-rich tracts occupy residues 698-713 (KPEK…EHRH) and 723-741 (HHNE…ETKE).

This sequence belongs to the polyribonucleotide nucleotidyltransferase family. It depends on Mg(2+) as a cofactor.

It localises to the cytoplasm. The enzyme catalyses RNA(n+1) + phosphate = RNA(n) + a ribonucleoside 5'-diphosphate. Functionally, involved in mRNA degradation. Catalyzes the phosphorolysis of single-stranded polyribonucleotides processively in the 3'- to 5'-direction. The chain is Polyribonucleotide nucleotidyltransferase from Streptococcus thermophilus (strain CNRZ 1066).